Consider the following 62-residue polypeptide: Photosystem II reaction center protein Z (62 aa).

Transmembrane regions (helical) follow at residues A8–A28 and F41–I61.

This sequence belongs to the PsbZ family. PSII is composed of 1 copy each of membrane proteins PsbA, PsbB, PsbC, PsbD, PsbE, PsbF, PsbH, PsbI, PsbJ, PsbK, PsbL, PsbM, PsbT, PsbY, PsbZ, Psb30/Ycf12, at least 3 peripheral proteins of the oxygen-evolving complex and a large number of cofactors. It forms dimeric complexes.

It localises to the plastid. It is found in the chloroplast thylakoid membrane. Its function is as follows. May control the interaction of photosystem II (PSII) cores with the light-harvesting antenna, regulates electron flow through the 2 photosystem reaction centers. PSII is a light-driven water plastoquinone oxidoreductase, using light energy to abstract electrons from H(2)O, generating a proton gradient subsequently used for ATP formation. The chain is Photosystem II reaction center protein Z from Hordeum vulgare (Barley).